The chain runs to 464 residues: Probable multidrug resistance protein NorM (464 aa).

12 helical membrane passes run Leu-22–Ala-42, Val-64–Ala-84, Phe-104–Ile-124, Leu-142–Leu-162, Met-172–Gly-192, Ala-204–Phe-224, Phe-258–Ala-278, Val-288–Gly-308, Gly-326–Glu-346, Ile-358–Ile-378, Gly-384–Trp-404, and Val-410–Ile-430.

This sequence belongs to the multi antimicrobial extrusion (MATE) (TC 2.A.66.1) family.

It is found in the cell membrane. Its function is as follows. Multidrug efflux pump. The polypeptide is Probable multidrug resistance protein NorM (norM) (Thermotoga maritima (strain ATCC 43589 / DSM 3109 / JCM 10099 / NBRC 100826 / MSB8)).